The chain runs to 271 residues: Type III pantothenate kinase (271 aa).

6–13 (DVRNTHTV) is a binding site for ATP. 109-112 (GADR) is a substrate binding site. Aspartate 111 acts as the Proton acceptor in catalysis. Residue aspartate 131 coordinates K(+). Serine 134 serves as a coordination point for ATP. Residue threonine 186 participates in substrate binding.

Belongs to the type III pantothenate kinase family. Homodimer. It depends on NH4(+) as a cofactor. Requires K(+) as cofactor.

It is found in the cytoplasm. It carries out the reaction (R)-pantothenate + ATP = (R)-4'-phosphopantothenate + ADP + H(+). The protein operates within cofactor biosynthesis; coenzyme A biosynthesis; CoA from (R)-pantothenate: step 1/5. In terms of biological role, catalyzes the phosphorylation of pantothenate (Pan), the first step in CoA biosynthesis. This is Type III pantothenate kinase from Mycolicibacterium smegmatis (strain ATCC 700084 / mc(2)155) (Mycobacterium smegmatis).